The primary structure comprises 556 residues: Glutamine--tRNA ligase (556 aa).

The 'HIGH' region motif lies at 34–44; the sequence is PEPNGFLHIGH. ATP-binding positions include 35 to 37 and 41 to 47; these read EPN and HIGHAKA. The L-glutamine site is built by D67 and Y212. ATP contacts are provided by residues T231, 261–262, and 269–271; these read RL and MSK. The short motif at 268 to 272 is the 'KMSKS' region element; it reads LMSKR.

The protein belongs to the class-I aminoacyl-tRNA synthetase family. Monomer.

It is found in the cytoplasm. The catalysed reaction is tRNA(Gln) + L-glutamine + ATP = L-glutaminyl-tRNA(Gln) + AMP + diphosphate. This Colwellia psychrerythraea (strain 34H / ATCC BAA-681) (Vibrio psychroerythus) protein is Glutamine--tRNA ligase.